The primary structure comprises 629 residues: DNA mismatch repair protein MutL (629 aa).

The interval 376–396 (QYHEKPQQNQPHFSNTPVLPN) is disordered. The span at 382–396 (QQNQPHFSNTPVLPN) shows a compositional bias: polar residues.

It belongs to the DNA mismatch repair MutL/HexB family.

This protein is involved in the repair of mismatches in DNA. It is required for dam-dependent methyl-directed DNA mismatch repair. May act as a 'molecular matchmaker', a protein that promotes the formation of a stable complex between two or more DNA-binding proteins in an ATP-dependent manner without itself being part of a final effector complex. The protein is DNA mismatch repair protein MutL of Haemophilus influenzae (strain PittEE).